Reading from the N-terminus, the 245-residue chain is Endonuclease III (245 aa).

The region spanning 119–138 (MDKLVTLPGVGRKTANVILG) is the HhH domain. [4Fe-4S] cluster-binding residues include cysteine 198, cysteine 205, cysteine 208, and cysteine 214.

Belongs to the Nth/MutY family. [4Fe-4S] cluster serves as cofactor.

It carries out the reaction 2'-deoxyribonucleotide-(2'-deoxyribose 5'-phosphate)-2'-deoxyribonucleotide-DNA = a 3'-end 2'-deoxyribonucleotide-(2,3-dehydro-2,3-deoxyribose 5'-phosphate)-DNA + a 5'-end 5'-phospho-2'-deoxyribonucleoside-DNA + H(+). In terms of biological role, DNA repair enzyme that has both DNA N-glycosylase activity and AP-lyase activity. The DNA N-glycosylase activity releases various damaged pyrimidines from DNA by cleaving the N-glycosidic bond, leaving an AP (apurinic/apyrimidinic) site. The AP-lyase activity cleaves the phosphodiester bond 3' to the AP site by a beta-elimination, leaving a 3'-terminal unsaturated sugar and a product with a terminal 5'-phosphate. Has a preference for oxidized pyrimidines, such as thymine glycol (prefers 5S isomers) 5,6-dihydrouracil:G, 5-hydroxyuracil:G, 5-hydroxycytosine:G and urea:A. Cleaves ssDNA containing an AP site. This chain is Endonuclease III, found in Mycobacterium tuberculosis (strain ATCC 25618 / H37Rv).